The sequence spans 393 residues: Putative competence-damage inducible protein (393 aa).

It belongs to the CinA family.

This chain is Putative competence-damage inducible protein, found in Streptococcus suis (strain 05ZYH33).